Here is a 65-residue protein sequence, read N- to C-terminus: Large ribosomal subunit protein bL35 (65 aa).

It belongs to the bacterial ribosomal protein bL35 family.

The protein is Large ribosomal subunit protein bL35 of Erwinia tasmaniensis (strain DSM 17950 / CFBP 7177 / CIP 109463 / NCPPB 4357 / Et1/99).